Consider the following 297-residue polypeptide: tRNA dimethylallyltransferase (297 aa).

Residue 15 to 22 (GPTASGKS) participates in ATP binding. 17–22 (TASGKS) is a binding site for substrate. 2 interaction with substrate tRNA regions span residues 40 to 43 (DSMQ) and 164 to 168 (QRIVR).

Belongs to the IPP transferase family. In terms of assembly, monomer. The cofactor is Mg(2+).

The catalysed reaction is adenosine(37) in tRNA + dimethylallyl diphosphate = N(6)-dimethylallyladenosine(37) in tRNA + diphosphate. In terms of biological role, catalyzes the transfer of a dimethylallyl group onto the adenine at position 37 in tRNAs that read codons beginning with uridine, leading to the formation of N6-(dimethylallyl)adenosine (i(6)A). The chain is tRNA dimethylallyltransferase from Rhizobium johnstonii (strain DSM 114642 / LMG 32736 / 3841) (Rhizobium leguminosarum bv. viciae).